The primary structure comprises 413 residues: Eukaryotic initiation factor 4A-7 (413 aa).

A Q motif motif is present at residues 40 to 68 (DSFDAMGLQENLLRGIYAYGFEKPSAIQQ). The Helicase ATP-binding domain maps to 71-241 (IVPFCKGLDV…RKFMNKPVRI (171 aa)). 84–91 (AQSGTGKT) serves as a coordination point for ATP. The DEAD box motif lies at 189 to 192 (DEAD). The Helicase C-terminal domain maps to 252–413 (GIKQFYVNVD…ELPANVADLL (162 aa)).

Belongs to the DEAD box helicase family. eIF4A subfamily. In terms of assembly, eIF4F is a multi-subunit complex, the composition of which varies with external and internal environmental conditions. It is composed of at least EIF4A, EIF4E and EIF4G.

The enzyme catalyses ATP + H2O = ADP + phosphate + H(+). Its function is as follows. ATP-dependent RNA helicase which is a subunit of the eIF4F complex involved in cap recognition and is required for mRNA binding to ribosome. In the current model of translation initiation, eIF4A unwinds RNA secondary structures in the 5'-UTR of mRNAs which is necessary to allow efficient binding of the small ribosomal subunit, and subsequent scanning for the initiator codon. The sequence is that of Eukaryotic initiation factor 4A-7 from Nicotiana tabacum (Common tobacco).